Consider the following 406-residue polypeptide: MSTTAHTEPSWADLPFLDFTDPNFSWDSPEVAEAREKSWIARTPLALLVLRYAEADQLARDKRLISGFRGLVDMVGTPEGPVRDFMVDFLQSLDGADHRRLRGLATHPFTPRRITAVQPFVRSTVEQLIDKLPQGDFDFVQHFPHPLPALVMCQLLGFPLEDYDTVGRLSIETNLGLALSNDQDILVKVEQGLGRMFDYLVAAIEKRKVEPGDDLTSDIVRAFHDGVLDDYELRTLVATVLVAGYETTNHQLALAMYDFAQHPDQWMKIKENPELAPQAVEEVLRWSPTLPVTATRVAAEDFEVNGVRIPTGTPVFMCAHVAHRDPRVFADADRFDITVKREAPSIAFGGGPHFCLGTALARLELTEAVAALATRLDPPQIAGEITWRHELGVAGPDALPLRFGAA.

Residues histidine 98, arginine 102, arginine 296, glycine 350, histidine 353, and cysteine 355 each coordinate heme b.

This sequence belongs to the cytochrome P450 family. Monomer. Heme b serves as cofactor.

It catalyses the reaction luteothin + 4 reduced [2Fe-2S]-[ferredoxin] + 2 O2 + 4 H(+) = aureothin + 4 oxidized [2Fe-2S]-[ferredoxin] + 3 H2O. The protein operates within antibiotic biosynthesis. It functions in the pathway polyketide biosynthesis. Functionally, bifunctional cytochrome P450 protein involved in the biosynthesis of the antibiotic aureothin, a nitroaryl polyketide metabolite with antifungal, cytotoxic and insecticidal activities. Catalyzes the hydroxylation of luteothin (also called deoxyaureothin), leading to the formation of the intermediate (7R)-7-hydroxydeoxyaureothin, followed by the formation of the aureothin tetrahydrofuran ring, the final step in the biosynthesis of aureothin. In Streptomyces thioluteus, this protein is Luteothin monooxygenase.